Reading from the N-terminus, the 306-residue chain is Acetylglutamate kinase (306 aa).

Residues 75–76, R97, and N197 contribute to the substrate site; that span reads GG.

The protein belongs to the acetylglutamate kinase family. ArgB subfamily.

The protein localises to the cytoplasm. It catalyses the reaction N-acetyl-L-glutamate + ATP = N-acetyl-L-glutamyl 5-phosphate + ADP. Its pathway is amino-acid biosynthesis; L-arginine biosynthesis; N(2)-acetyl-L-ornithine from L-glutamate: step 2/4. Its function is as follows. Catalyzes the ATP-dependent phosphorylation of N-acetyl-L-glutamate. This Streptomyces coelicolor (strain ATCC BAA-471 / A3(2) / M145) protein is Acetylglutamate kinase.